A 116-amino-acid polypeptide reads, in one-letter code: Large ribosomal subunit protein bL19 (116 aa).

This sequence belongs to the bacterial ribosomal protein bL19 family.

Functionally, this protein is located at the 30S-50S ribosomal subunit interface and may play a role in the structure and function of the aminoacyl-tRNA binding site. This is Large ribosomal subunit protein bL19 from Pseudomonas fluorescens (strain Pf0-1).